The primary structure comprises 211 residues: Small ribosomal subunit protein uS3 (211 aa).

The region spanning 39–107 is the KH type-2 domain; sequence VTKYVESSFA…VPSLNVVEVK (69 aa).

This sequence belongs to the universal ribosomal protein uS3 family. As to quaternary structure, part of the 30S ribosomal subunit. Forms a tight complex with proteins S10 and S14.

Functionally, binds the lower part of the 30S subunit head. Binds mRNA in the 70S ribosome, positioning it for translation. The sequence is that of Small ribosomal subunit protein uS3 from Neorickettsia sennetsu (strain ATCC VR-367 / Miyayama) (Ehrlichia sennetsu).